The primary structure comprises 160 residues: Cytochrome c-type biogenesis protein CcmE (160 aa).

Topologically, residues 1-7 (MTRKQRR) are cytoplasmic. Residues 8–28 (ATFIAVSLGILALAVGLVLYA) form a helical; Signal-anchor for type II membrane protein membrane-spanning segment. The Periplasmic segment spans residues 29–160 (MRDSIVYFYS…SETYGQGSYP (132 aa)). Residues H122 and Y126 each coordinate heme. The interval 141–160 (WQGEGAEAPHSETYGQGSYP) is disordered.

Belongs to the CcmE/CycJ family.

It localises to the cell inner membrane. Heme chaperone required for the biogenesis of c-type cytochromes. Transiently binds heme delivered by CcmC and transfers the heme to apo-cytochromes in a process facilitated by CcmF and CcmH. This chain is Cytochrome c-type biogenesis protein CcmE, found in Parvibaculum lavamentivorans (strain DS-1 / DSM 13023 / NCIMB 13966).